Here is a 348-residue protein sequence, read N- to C-terminus: 4-hydroxyphenylpyruvate dioxygenase (348 aa).

2 VOC domains span residues 11–141 (GFAF…ITSS) and 151–303 (AIDH…IFTE). Fe cation contacts are provided by H154, H232, and E312.

The protein belongs to the 4HPPD family. Requires Fe cation as cofactor.

The enzyme catalyses 3-(4-hydroxyphenyl)pyruvate + O2 = homogentisate + CO2. Catalyzes the transformation of p-hydroxyphenylpyruvate into HGA. Has hemolytic and brown pigment production activity. This Legionella pneumophila (strain Corby) protein is 4-hydroxyphenylpyruvate dioxygenase (lly).